An 83-amino-acid chain; its full sequence is Small ribosomal subunit protein uS17 (83 aa).

This sequence belongs to the universal ribosomal protein uS17 family. Part of the 30S ribosomal subunit.

Its function is as follows. One of the primary rRNA binding proteins, it binds specifically to the 5'-end of 16S ribosomal RNA. The polypeptide is Small ribosomal subunit protein uS17 (Colwellia psychrerythraea (strain 34H / ATCC BAA-681) (Vibrio psychroerythus)).